Consider the following 248-residue polypeptide: Ribonuclease PH (248 aa).

Phosphate contacts are provided by residues R86 and 124–126 (GTR).

It belongs to the RNase PH family. In terms of assembly, homohexameric ring arranged as a trimer of dimers.

It carries out the reaction tRNA(n+1) + phosphate = tRNA(n) + a ribonucleoside 5'-diphosphate. Phosphorolytic 3'-5' exoribonuclease that plays an important role in tRNA 3'-end maturation. Removes nucleotide residues following the 3'-CCA terminus of tRNAs; can also add nucleotides to the ends of RNA molecules by using nucleoside diphosphates as substrates, but this may not be physiologically important. Probably plays a role in initiation of 16S rRNA degradation (leading to ribosome degradation) during starvation. The chain is Ribonuclease PH from Clostridium perfringens (strain SM101 / Type A).